The chain runs to 297 residues: uncharacterized protein (297 aa).

The span at 1-12 (MASYSFQFSTDA) shows a compositional bias: polar residues. The segment at 1 to 21 (MASYSFQFSTDATGKPGAAKP) is disordered.

This sequence to B.subtilis XkdY/XepA.

This is an uncharacterized protein from Bacillus subtilis (strain 168).